The chain runs to 711 residues: Nucleolin (711 aa).

The tract at residues 1 to 304 (MVKLAKAGKN…KKQKVEGTEP (304 aa)) is disordered. N6-acetyllysine is present on residues Lys9, Lys15, and Lys16. Residues 24–43 (VEEDSEDEEMSEDEEDDSSG) show a composition bias toward acidic residues. Ser28, Ser34, Ser41, and Ser42 each carry phosphoserine. The span at 56-107 (AAATSAKKVVVSPTKKVAVATPAKKAAVTPGKKAAATPAKKTVTPAKAVATP) shows a compositional bias: low complexity. Residues 58-65 (ATSAKKVV) form repeat 1. The 8 X 8 AA tandem repeats of X-T-P-X-K-K-X-X stretch occupies residues 58-135 (ATSAKKVVVS…GAAIPAKGAK (78 aa)). Ser67 carries the post-translational modification Phosphoserine. Phosphothreonine occurs at positions 69, 76, 84, and 92. A run of 3 repeats spans residues 75–82 (ATPAKKAA), 83–90 (VTPGKKAA), and 91–98 (ATPAKKTV). N6-acetyllysine is present on Lys96. Residue Thr99 is modified to Phosphothreonine. Residues 99–104 (TPAKAV) form a 5; truncated repeat. The residue at position 102 (Lys102) is an N6-acetyllysine. The stretch at 105-112 (ATPGKKGA) is repeat 6. Thr106 is modified (phosphothreonine). Residue Lys109 is modified to N6-acetyllysine. Position 113 is a phosphothreonine (Thr113). At Lys116 the chain carries N6-acetyllysine. 2 tandem repeats follow at residues 120–127 (ATPGKKGA) and 128–135 (AIPAKGAK). Residue Thr121 is modified to Phosphothreonine. The span at 122-137 (PGKKGAAIPAKGAKNG) shows a compositional bias: low complexity. Lys124 carries the post-translational modification N6-acetyllysine. Ser145, Ser153, Ser184, and Ser207 each carry phosphoserine. Acidic residues-rich tracts occupy residues 145–171 (SDEE…DEIE) and 184–212 (SEDE…EEAM). Position 215 is a phosphothreonine (Thr215). The span at 235 to 273 (EDEDEEEDDEDEDDDDDEDDEDEDDDDEDEEEEEEEEEP) shows a compositional bias: acidic residues. Positions 274–301 (VKEAPGKRKKEMAKQKAAPEAKKQKVEG) are enriched in basic and acidic residues. A Glycyl lysine isopeptide (Lys-Gly) (interchain with G-Cter in SUMO1); alternate cross-link involves residue Lys298. Lys298 is covalently cross-linked (Glycyl lysine isopeptide (Lys-Gly) (interchain with G-Cter in SUMO2); alternate). A Phosphothreonine modification is found at Thr302. RRM domains lie at 308–384 (FNLF…KPKG) and 394–467 (RTLL…YTGE). N6-acetyllysine is present on Lys319. Lys325 is covalently cross-linked (Glycyl lysine isopeptide (Lys-Gly) (interchain with G-Cter in SUMO1); alternate). Residue Lys325 forms a Glycyl lysine isopeptide (Lys-Gly) (interchain with G-Cter in SUMO2); alternate linkage. Residue Lys349 is modified to N6-acetyllysine. At Ser357 the chain carries Phosphoserine. Thr368 is modified (phosphothreonine). Lys371 participates in a covalent cross-link: Glycyl lysine isopeptide (Lys-Gly) (interchain with G-Cter in SUMO2). Lys378 participates in a covalent cross-link: Glycyl lysine isopeptide (Lys-Gly) (interchain with G-Cter in SUMO2); alternate. An N6-acetyllysine; alternate modification is found at Lys378. N6-acetyllysine occurs at positions 399 and 404. Thr406 is subject to Phosphothreonine. Lys428 and Lys445 each carry N6-acetyllysine. Ser459 and Ser461 each carry phosphoserine. An N6-acetyllysine mark is found at Lys468 and Lys478. The 75-residue stretch at 487–561 (KTLVLSNLSY…RAIRLELQGP (75 aa)) folds into the RRM 3 domain. A Glycyl lysine isopeptide (Lys-Gly) (interchain with G-Cter in SUMO2); alternate cross-link involves residue Lys514. N6-acetyllysine; alternate is present on Lys514. Lys522 carries the post-translational modification N6-acetyllysine. The residue at position 564 (Ser564) is a Phosphoserine. At Lys573 the chain carries N6-acetyllysine. Positions 573 to 648 (KTLFVKGLSE…NKVTLDWAKP (76 aa)) constitute an RRM 4 domain. A Glycyl lysine isopeptide (Lys-Gly) (interchain with G-Cter in SUMO2); alternate cross-link involves residue Lys578. Lys578 is modified (N6-acetyllysine; alternate). The residue at position 581 (Ser581) is a Phosphoserine. Residue Lys590 forms a Glycyl lysine isopeptide (Lys-Gly) (interchain with G-Cter in SUMO1); alternate linkage. Residue Lys590 forms a Glycyl lysine isopeptide (Lys-Gly) (interchain with G-Cter in SUMO2); alternate linkage. 2 positions are modified to phosphoserine: Ser592 and Ser620. Residue Lys625 forms a Glycyl lysine isopeptide (Lys-Gly) (interchain with G-Cter in SUMO2) linkage. Positions 641–711 (VTLDWAKPKG…KPQGKKTKFE (71 aa)) are disordered. The residue at position 647 (Lys647) is an N6-acetyllysine. The span at 651 to 697 (EGGFGGRGGGRGGFGGRGGGRGGRGGFGGRGRGGFGGRGGFRGGRGG) shows a compositional bias: gly residues. Asymmetric dimethylarginine occurs at positions 657, 661, 667, 671, 674, 680, 682, 688, and 692. Arg695 bears the Asymmetric dimethylarginine; alternate mark. Arg695 carries the omega-N-methylarginine; alternate modification. Over residues 698–711 (GGDHKPQGKKTKFE) the composition is skewed to basic and acidic residues.

As to quaternary structure, identified in a IGF2BP1-dependent mRNP granule complex containing untranslated mRNAs. Component of the SWAP complex that consists of NPM1, NCL/nucleolin, PARP1 and SWAP70. Component of a complex which is at least composed of HTATSF1/Tat-SF1, the P-TEFb complex components CDK9 and CCNT1, RNA polymerase II, SUPT5H, and NCL/nucleolin. Interacts with AICDA. Interacts with APTX. Interacts with C1QBP. Interacts with ERBB4. Interacts (via C-terminus) with FMR1 isoform 6 (via N-terminus). Interacts with GZF1; this interaction is important for nucleolar localization of GZF1. Interacts with NSUN2. Interacts with NVL. Interacts (via N-terminus domain) with SETX. Interacts (via RRM1 and C-terminal RRM4/Arg/Gly-rich domains) with TERT; the interaction is important for nucleolar localization of TERT. Interacts with WDR46. Interacts with ZFP36. Interacts with LRRC34. Interacts with RRP1B. Interacts with HNRNPU; this interaction occurs during mitosis. Interacts with RIOK1; RIOK1 recruits NCL to PRMT5 for symmetrically methylation. Interacts with ZBTB7B. Interacts with MDK; this interaction promotes NCL clustering and lateral movements of this complex into lipid rafts leading to MDK internalization. Interacts with HDGF. Interacts with ALKBH2. Interacts with IGFBP5; this interaction is necessary for IGFBP5 localization to the nucleus. Some glutamate residues are glycylated by TTLL8. This modification occurs exclusively on glutamate residues and results in a glycine chain on the gamma-carboxyl group. In terms of processing, symmetrically methylated by PRMT5.

It is found in the nucleus. Its subcellular location is the nucleolus. The protein resides in the cytoplasm. In terms of biological role, nucleolin is the major nucleolar protein of growing eukaryotic cells. It is found associated with intranucleolar chromatin and pre-ribosomal particles. It induces chromatin decondensation by binding to histone H1. It is thought to play a role in pre-rRNA transcription and ribosome assembly. May play a role in the process of transcriptional elongation. Binds RNA oligonucleotides with 5'-UUAGGG-3' repeats more tightly than the telomeric single-stranded DNA 5'-TTAGGG-3' repeats. This Macaca fascicularis (Crab-eating macaque) protein is Nucleolin (NCL).